The chain runs to 719 residues: Endonuclease MutS2 (719 aa).

Position 273-280 (Gly273–Thr280) interacts with ATP. A Smr domain is found at Leu644–Lys719.

It belongs to the DNA mismatch repair MutS family. MutS2 subfamily. Homodimer. Binds to stalled ribosomes, contacting rRNA.

Functionally, endonuclease that is involved in the suppression of homologous recombination and thus may have a key role in the control of bacterial genetic diversity. Its function is as follows. Acts as a ribosome collision sensor, splitting the ribosome into its 2 subunits. Detects stalled/collided 70S ribosomes which it binds and splits by an ATP-hydrolysis driven conformational change. Acts upstream of the ribosome quality control system (RQC), a ribosome-associated complex that mediates the extraction of incompletely synthesized nascent chains from stalled ribosomes and their subsequent degradation. Probably generates substrates for RQC. The protein is Endonuclease MutS2 of Staphylococcus aureus.